Here is a 69-residue protein sequence, read N- to C-terminus: Light-harvesting protein B-870 beta chain (69 aa).

A propeptide spanning residues 1–2 is cleaved from the precursor; it reads MA. Residues 3–22 are Cytoplasmic-facing; the sequence is EVKQESLSGITEGEAKEFHK. Residues histidine 21 and histidine 39 each coordinate a bacteriochlorophyll. Residues 23-45 form a helical membrane-spanning segment; it reads IFTSSILVFFGVAAFAHLLVWIW. At 46–56 the chain is on the periplasmic side; the sequence is RPWVPGPNGYS. The propeptide occupies 57-69; that stretch reads ALETLTQTLTYLS.

Belongs to the antenna complex beta subunit family. As to quaternary structure, the core complex is formed by different alpha and beta chains, binding bacteriochlorophyll molecules, and arranged most probably in tetrameric structures disposed around the reaction center. The non-pigmented gamma chains may constitute additional components.

The protein localises to the cell inner membrane. Antenna complexes are light-harvesting systems, which transfer the excitation energy to the reaction centers. In Rhodospirillum rubrum (strain ATCC 11170 / ATH 1.1.1 / DSM 467 / LMG 4362 / NCIMB 8255 / S1), this protein is Light-harvesting protein B-870 beta chain.